The following is a 123-amino-acid chain: Small ribosomal subunit protein uS12 (123 aa).

Position 89 is a 3-methylthioaspartic acid (aspartate 89).

It belongs to the universal ribosomal protein uS12 family. As to quaternary structure, part of the 30S ribosomal subunit. Contacts proteins S8 and S17. May interact with IF1 in the 30S initiation complex.

Functionally, with S4 and S5 plays an important role in translational accuracy. In terms of biological role, interacts with and stabilizes bases of the 16S rRNA that are involved in tRNA selection in the A site and with the mRNA backbone. Located at the interface of the 30S and 50S subunits, it traverses the body of the 30S subunit contacting proteins on the other side and probably holding the rRNA structure together. The combined cluster of proteins S8, S12 and S17 appears to hold together the shoulder and platform of the 30S subunit. The chain is Small ribosomal subunit protein uS12 from Orientia tsutsugamushi (strain Ikeda) (Rickettsia tsutsugamushi).